A 363-amino-acid chain; its full sequence is Phosphoserine aminotransferase (363 aa).

Arginine 42 is an L-glutamate binding site. Residues 76–77 (GR), tryptophan 102, threonine 156, aspartate 175, and glutamine 198 contribute to the pyridoxal 5'-phosphate site. Lysine 199 carries the N6-(pyridoxal phosphate)lysine modification. 240–241 (NT) provides a ligand contact to pyridoxal 5'-phosphate.

This sequence belongs to the class-V pyridoxal-phosphate-dependent aminotransferase family. SerC subfamily. As to quaternary structure, homodimer. Pyridoxal 5'-phosphate serves as cofactor.

The protein resides in the cytoplasm. It carries out the reaction O-phospho-L-serine + 2-oxoglutarate = 3-phosphooxypyruvate + L-glutamate. The enzyme catalyses 4-(phosphooxy)-L-threonine + 2-oxoglutarate = (R)-3-hydroxy-2-oxo-4-phosphooxybutanoate + L-glutamate. The protein operates within amino-acid biosynthesis; L-serine biosynthesis; L-serine from 3-phospho-D-glycerate: step 2/3. It functions in the pathway cofactor biosynthesis; pyridoxine 5'-phosphate biosynthesis; pyridoxine 5'-phosphate from D-erythrose 4-phosphate: step 3/5. In terms of biological role, catalyzes the reversible conversion of 3-phosphohydroxypyruvate to phosphoserine and of 3-hydroxy-2-oxo-4-phosphonooxybutanoate to phosphohydroxythreonine. The chain is Phosphoserine aminotransferase from Shewanella sp. (strain MR-4).